Here is a 201-residue protein sequence, read N- to C-terminus: Phospholipase A2 inhibitor NAI (201 aa).

Residues 1–19 (MKSLQIICLLFVLVARGSC) form the signal peptide. Cystine bridges form between Cys22-Cys47, Cys25-Cys32, Cys40-Cys68, Cys74-Cys95, Cys96-Cys101, Cys119-Cys144, Cys137-Cys166, and Cys170-Cys191. Asn176 carries N-linked (GlcNAc...) asparagine glycosylation.

Belongs to the CNF-like-inhibitor family. As to quaternary structure, heterotrimer of 2 subunits A and 1 subunit B; non-covalently linked. Post-translationally, N-glycosylated, probably by biantennary structure. Glycosylation does not change PLA2 inhibitory activity. As to expression, expressed by the liver.

Its subcellular location is the secreted. In terms of biological role, inhibits the enzymatic activity of all phospholipase A2 tested, binding them with micromole to nanomole affinity. The polypeptide is Phospholipase A2 inhibitor NAI (Notechis ater (Black tiger snake)).